A 506-amino-acid polypeptide reads, in one-letter code: Zinc finger protein MAGPIE (506 aa).

Positions 1 to 53 (MTTEDQTISSSGGYVQSSSTTDHVDHHHHDQHESLNPPLVKKKRNLPGNPDPE) are disordered. Residues 9–21 (SSSGGYVQSSSTT) are compositionally biased toward low complexity. Basic and acidic residues predominate over residues 22–33 (DHVDHHHHDQHE). Ser60 bears the Phosphoserine mark. C2H2-type zinc fingers lie at residues 70–92 (FLCEICGKGFQRDQNLQLHRRGH) and 111–141 (YVCPEKSCVHHHPTRALGDLTGIKKHFCRKH). The Nuclear localization signal motif lies at 133–140 (IKKHFCRK). A C2H2-type 2; degenerate zinc finger spans residues 146–169 (WKCEKCAKRYAVQSDWKAHSKTCG). Positions 148, 151, 164, 168, 175, 177, 190, and 194 each coordinate Zn(2+). Residues 173–196 (YRCDCGTIFSRRDSFITHRAFCDA) form a CCHC-type 2; atypical zinc finger. An SHR-binding region spans residues 183–195 (RRDSFITHRAFCD).

In terms of assembly, interacts with SHR, SCR and JKD, but not with itself. Interacts with SIEL. Binds to RGA and SCL3 competitively in the nucleus. Expressed in the ground tissue and stele cells of embryos and 2-days post-germination roots but not in the quiescent center. Detected only in cells that perform asymmetric cell divisions. In roots, present in cortex, endodermis, and pericycle layer.

The protein resides in the nucleus. In terms of biological role, transcription factor that regulates tissue boundaries and asymmetric cell division. Contributes to the sequestration of 'SHORT-ROOT' to the nucleus. Interacts with the SCR and MGP promoters. Does not show transcription activity by itself, but regulates the transcription of downstream genes through interaction with other transcription factors. Binds DNA via its zinc fingers. Recognizes and binds to SCL3 promoter sequence 5'-AGACAA-3' to promote its expression when in complex with RGA. Positively involved in gibberellic acid (GA) signaling. The chain is Zinc finger protein MAGPIE from Arabidopsis thaliana (Mouse-ear cress).